Here is a 429-residue protein sequence, read N- to C-terminus: Ribosomal RNA small subunit methyltransferase B (429 aa).

Residues 254–260 (CAAPGGK), Asp277, Asp303, and Asp322 contribute to the S-adenosyl-L-methionine site. The active-site Nucleophile is the Cys375. Positions 397 to 419 (ALSETGTPDQPGQQNLPGGEEGD) are disordered. Polar residues predominate over residues 400–412 (ETGTPDQPGQQNL).

The protein belongs to the class I-like SAM-binding methyltransferase superfamily. RsmB/NOP family.

The protein resides in the cytoplasm. It carries out the reaction cytidine(967) in 16S rRNA + S-adenosyl-L-methionine = 5-methylcytidine(967) in 16S rRNA + S-adenosyl-L-homocysteine + H(+). Its function is as follows. Specifically methylates the cytosine at position 967 (m5C967) of 16S rRNA. The polypeptide is Ribosomal RNA small subunit methyltransferase B (Salmonella newport (strain SL254)).